A 775-amino-acid chain; its full sequence is WD repeat-containing protein pop1 (775 aa).

Residues Lys298–Leu345 form the F-box domain. WD repeat units lie at residues Glu444–Asp472, Gly484–Ser538, Gly575–Lys603, Gly615–Asn645, and Gly657–Asp687.

As to quaternary structure, homodimer and heterodimer with pop2. Binds to cdc18, phosphorylated cig2, cul1, pip1 and skp1.

The protein localises to the nucleus. Involved in maintenance of ploidy through proteasome dependent degradation of CDK inhibitor rum1 and S-phase initiator cdc18. Functions as a recognition factor for rum1 and cdc18, which are subsequently ubiquitinated and targeted to the 26S proteasome for degradation. Together with pop2, required for cig2 instability during G2 and M phase and cig2 degradation in exponentially growing cells. Regulates cell-cycle progression under starvation through the rum1 protein. This Schizosaccharomyces pombe (strain 972 / ATCC 24843) (Fission yeast) protein is WD repeat-containing protein pop1 (pop1).